The chain runs to 138 residues: Large ribosomal subunit protein uL16 (138 aa).

Residues 1-13 (MLQPKRRKYRKEQ) are compositionally biased toward basic residues. The tract at residues 1–20 (MLQPKRRKYRKEQKGRNTGI) is disordered.

It belongs to the universal ribosomal protein uL16 family. Part of the 50S ribosomal subunit.

Functionally, binds 23S rRNA and is also seen to make contacts with the A and possibly P site tRNAs. In Burkholderia mallei (strain NCTC 10247), this protein is Large ribosomal subunit protein uL16.